Here is a 79-residue protein sequence, read N- to C-terminus: Quinohemoprotein amine dehydrogenase subunit gamma (79 aa).

The 4-cysteinyl-glutamic acid (Cys-Glu) cross-link spans 7–16 (CTATTDPGWE). Cross-links (3-cysteinyl-aspartic acid (Cys-Asp)) lie at residues 27–33 (CQPMEAD) and 41–49 (CWWPAQVPD). Aspartate 33 serves as the catalytic Proton acceptor. A cross-link (4'-cysteinyl-tryptophylquinone (Cys-Trp)) is located at residues 37 to 43 (CSDPCWW). Tryptophan 43 carries the tryptophylquinone modification.

It belongs to the quinohemoprotein amine dehydrogenase subunit gamma family. In terms of assembly, heterotrimer of an alpha, a beta and a gamma subunit. It depends on cysteine tryptophylquinone residue as a cofactor. The cysteine tryptophylquinone (CTQ) is generated by oxidation of the indole ring of a tryptophan residue to form tryptophylquinone, followed by covalent cross-linking with a cysteine residue.

Its subcellular location is the periplasm. It catalyses the reaction an aliphatic amine + A + H2O = an aldehyde + AH2 + NH4(+). Functionally, catalyzes the oxidative deamination of a wide range of aliphatic monoamines and diamines. The physiological electron acceptor is an azurin-like blue protein. In Pseudomonas putida (strain ATCC 47054 / DSM 6125 / CFBP 8728 / NCIMB 11950 / KT2440), this protein is Quinohemoprotein amine dehydrogenase subunit gamma (qhnDH).